The primary structure comprises 264 residues: S-adenosylmethionine decarboxylase proenzyme (264 aa).

The Schiff-base intermediate with substrate; via pyruvic acid role is filled by Ser-112. Ser-112 is modified (pyruvic acid (Ser); by autocatalysis). The active-site Proton acceptor; for processing activity is the His-117. The Proton donor; for catalytic activity role is filled by Cys-140.

The protein belongs to the prokaryotic AdoMetDC family. Type 2 subfamily. In terms of assembly, heterooctamer of four alpha and four beta chains arranged as a tetramer of alpha/beta heterodimers. Requires pyruvate as cofactor. In terms of processing, is synthesized initially as an inactive proenzyme. Formation of the active enzyme involves a self-maturation process in which the active site pyruvoyl group is generated from an internal serine residue via an autocatalytic post-translational modification. Two non-identical subunits are generated from the proenzyme in this reaction, and the pyruvate is formed at the N-terminus of the alpha chain, which is derived from the carboxyl end of the proenzyme. The post-translation cleavage follows an unusual pathway, termed non-hydrolytic serinolysis, in which the side chain hydroxyl group of the serine supplies its oxygen atom to form the C-terminus of the beta chain, while the remainder of the serine residue undergoes an oxidative deamination to produce ammonia and the pyruvoyl group blocking the N-terminus of the alpha chain.

It catalyses the reaction S-adenosyl-L-methionine + H(+) = S-adenosyl 3-(methylsulfanyl)propylamine + CO2. It participates in amine and polyamine biosynthesis; S-adenosylmethioninamine biosynthesis; S-adenosylmethioninamine from S-adenosyl-L-methionine: step 1/1. In terms of biological role, catalyzes the decarboxylation of S-adenosylmethionine to S-adenosylmethioninamine (dcAdoMet), the propylamine donor required for the synthesis of the polyamines spermine and spermidine from the diamine putrescine. The sequence is that of S-adenosylmethionine decarboxylase proenzyme from Klebsiella pneumoniae (strain 342).